The following is a 406-amino-acid chain: CinA-like protein (406 aa).

The protein belongs to the CinA family.

The polypeptide is CinA-like protein (Pseudothermotoga lettingae (strain ATCC BAA-301 / DSM 14385 / NBRC 107922 / TMO) (Thermotoga lettingae)).